The sequence spans 203 residues: Probable flagellin 1 (203 aa).

Positions 1–6 (MRRRRG) are excised as a propeptide.

This sequence belongs to the archaeal flagellin family.

The protein localises to the archaeal flagellum. Its function is as follows. Flagellin is the subunit protein which polymerizes to form the filaments of archaeal flagella. The sequence is that of Probable flagellin 1 (flaB1) from Aeropyrum pernix (strain ATCC 700893 / DSM 11879 / JCM 9820 / NBRC 100138 / K1).